A 489-amino-acid chain; its full sequence is MMYEKRSYTGYGHPSSHYDYPPPSGPPGSFYLADVPPQHFYQWRSPPGIVRILQGSVVILCLVIFACVASTLAWEYYGSGGLLGYGGGLGSYYNGYYGGYNGYYYGGLTNPRAANGFMIAMAVLCFLVTLGLVIAGLSKASGARSRRFYLLVAVLSGLLAFVMLIASIVYVVGVNPRAGLGASSGSLYYNQMLMLCNQMMSPVAGGIMNQYLYHYCMVDPQEAVAIVCGFLTVILLCVICYFAQKTRHKIWKYGKPNIFWDKPLATAEGPNVEEWVKNVSGDVGTQDETATLAYSEKPISPLTSAFLPAQENGYGHSTPSSPSVPPPEGPSPPEEKDKGSVSRPPARRGHRQRPRPTGLEESQYETDYTTAAESSGEQNRDDWASLYPPIISDAIRQTYKAEFNNDLQRYKALCAEMDDIGTQLRQLSHELDCLPEGSLRYQGVAEEYNRLKDLKRSPEYQSKKLETQSLRDKLCHIKRMVGGYDQSRS.

The Cytoplasmic portion of the chain corresponds to 1–51; sequence MMYEKRSYTGYGHPSSHYDYPPPSGPPGSFYLADVPPQHFYQWRSPPGIVR. One can recognise an MARVEL domain in the interval 45 to 248; the sequence is SPPGIVRILQ…ICYFAQKTRH (204 aa). Residues 52–74 form a helical membrane-spanning segment; that stretch reads ILQGSVVILCLVIFACVASTLAW. Topologically, residues 75-112 are extracellular; that stretch reads EYYGSGGLLGYGGGLGSYYNGYYGGYNGYYYGGLTNPR. The helical transmembrane segment at 113-137 threads the bilayer; that stretch reads AANGFMIAMAVLCFLVTLGLVIAGL. The Cytoplasmic segment spans residues 138–147; that stretch reads SKASGARSRR. Residues 148-172 form a helical membrane-spanning segment; it reads FYLLVAVLSGLLAFVMLIASIVYVV. The Extracellular segment spans residues 173–222; the sequence is GVNPRAGLGASSGSLYYNQMLMLCNQMMSPVAGGIMNQYLYHYCMVDPQE. An intrachain disulfide couples Cys-196 to Cys-216. A helical membrane pass occupies residues 223 to 244; sequence AVAIVCGFLTVILLCVICYFAQ. Residues 245–489 are Cytoplasmic-facing; it reads KTRHKIWKYG…MVGGYDQSRS (245 aa). Ser-280 is modified (phosphoserine). Thr-285 is modified (phosphothreonine). Ser-300 bears the Phosphoserine mark. The segment at 308–382 is disordered; that stretch reads PAQENGYGHS…ESSGEQNRDD (75 aa). Residues 322–332 show a composition bias toward pro residues; it reads PSVPPPEGPSP. A compositionally biased stretch (basic residues) spans 345–354; it reads PARRGHRQRP. 2 positions are modified to phosphotyrosine: Tyr-364 and Tyr-368. Residues 365–377 are compositionally biased toward polar residues; it reads ETDYTTAAESSGE. Thr-369 and Thr-370 each carry phosphothreonine; by PKC/PRKCH. Position 374 is a phosphoserine (Ser-374). One can recognise an OCEL domain in the interval 381–489; sequence DDWASLYPPI…MVGGYDQSRS (109 aa). A coiled-coil region spans residues 407–434; it reads LQRYKALCAEMDDIGTQLRQLSHELDCL. A Phosphoserine modification is found at Ser-457.

Belongs to the ELL/occludin family. In terms of assembly, interacts with TJP1/ZO1. Interacts with VAPA. Interacts with CLDN1, CLDN6, CLDN9, CLDN11, CLDN12 and CLDN17. Interacts with PLSCR1. Interacts with LSR, ILDR1 and ILDR2. Interacts with TJP2/ZO2. Post-translationally, dephosphorylated by PTPRJ. In terms of tissue distribution, localized at tight junctions of both epithelial and endothelial cells.

Its subcellular location is the cell membrane. It is found in the cell junction. The protein localises to the tight junction. Its function is as follows. May play a role in the formation and regulation of the tight junction (TJ) paracellular permeability barrier. The polypeptide is Occludin (OCLN) (Potorous tridactylus (Potoroo)).